We begin with the raw amino-acid sequence, 117 residues long: Large ribosomal subunit protein bL20 (117 aa).

This sequence belongs to the bacterial ribosomal protein bL20 family.

In terms of biological role, binds directly to 23S ribosomal RNA and is necessary for the in vitro assembly process of the 50S ribosomal subunit. It is not involved in the protein synthesizing functions of that subunit. The protein is Large ribosomal subunit protein bL20 of Mycoplasma mobile (strain ATCC 43663 / 163K / NCTC 11711) (Mesomycoplasma mobile).